A 138-amino-acid polypeptide reads, in one-letter code: Cytosolic calcium-binding protein 2 (138 aa).

Residues 31 to 41 are compositionally biased toward low complexity; sequence TEVTQQPEESV. Positions 31–122 are disordered; it reads TEVTQQPEES…KKTEVVEEKQ (92 aa). 6 repeat units span residues 62-68, 71-75, 92-98, 109-114, 118-122, and 131-135. The 6 X 5 AA approximate repeats of V-E-E-K-K stretch occupies residues 62 to 135; it reads VEEAEKKDEE…AAAEEVAVEK (74 aa). Residues 64–85 are compositionally biased toward basic and acidic residues; the sequence is EAEKKDEETEKKTEEKDEKTEV. The segment covering 110 to 122 has biased composition (basic and acidic residues); it reads EEEKKTEVVEEKQ.

In terms of tissue distribution, predominantly expressed in roots (e.g. in endodermis in the stele) and stems, to a lower extent in shoots, flowers and siliques, and, at low levels, in leaves.

The protein resides in the cytoplasm. It localises to the cytosol. Binds calcium Ca(2+) and may act as a signal mediator to buffer Ca(2+). This is Cytosolic calcium-binding protein 2 from Arabidopsis thaliana (Mouse-ear cress).